The sequence spans 510 residues: 2,3-bisphosphoglycerate-independent phosphoglycerate mutase (510 aa).

Residues Asp12 and Ser62 each coordinate Mn(2+). Ser62 (phosphoserine intermediate) is an active-site residue. Residues His123, 153 to 154 (RD), Arg185, Arg191, 261 to 264 (RPDR), and Lys336 each bind substrate. Residues Asp403, His407, Asp444, His445, and His462 each contribute to the Mn(2+) site.

The protein belongs to the BPG-independent phosphoglycerate mutase family. Monomer. Mn(2+) serves as cofactor.

The catalysed reaction is (2R)-2-phosphoglycerate = (2R)-3-phosphoglycerate. The protein operates within carbohydrate degradation; glycolysis; pyruvate from D-glyceraldehyde 3-phosphate: step 3/5. Functionally, essential for rapid growth and for sporulation. Catalyzes the interconversion of 2-phosphoglycerate and 3-phosphoglycerate. This chain is 2,3-bisphosphoglycerate-independent phosphoglycerate mutase, found in Priestia megaterium (strain DSM 319 / IMG 1521) (Bacillus megaterium).